Consider the following 540-residue polypeptide: Upstream-binding protein 1 (540 aa).

Ser-22 bears the Phosphoserine mark. The Grh/CP2 DB domain maps to 60–296; sequence EHPPFQYVMC…EQKKSSKRTL (237 aa). Disordered regions lie at residues 236-270 and 285-368; these read KPKG…DTTI and EHEQ…QPSA. The segment covering 238 to 262 has biased composition (basic and acidic residues); the sequence is KGADRKQKTDREKMEKRTAHEKEKY. Over residues 320–368 the composition is skewed to polar residues; that stretch reads YVNNSPSPAPTFTSPQQSTCSVPDSNSSSPNHQGDGASQTSGEQIQPSA. Ser-390 and Ser-393 each carry phosphoserine.

Belongs to the grh/CP2 family. CP2 subfamily. In terms of assembly, interacts with TFCP2. Interacts with PIAS1, and is probably part of a complex containing TFCP2, UBP1 and PIAS1. Expressed in adrenal tissue, JEG-3, NCI-H295A, Hep-G2 and HeLa cell lines.

It is found in the nucleus. Functionally, functions as a transcriptional activator in a promoter context-dependent manner. Modulates the placental expression of CYP11A1. Involved in regulation of the alpha-globin gene in erythroid cells. Activation of the alpha-globin promoter in erythroid cells is via synergistic interaction with TFCP2. Involved in regulation of the alpha-globin gene in erythroid cells. Binds strongly to sequences around the HIV-1 initiation site and weakly over the TATA-box. Represses HIV-1 transcription by inhibiting the binding of TFIID to the TATA-box. This chain is Upstream-binding protein 1 (UBP1), found in Homo sapiens (Human).